Reading from the N-terminus, the 332-residue chain is Glyceraldehyde-3-phosphate dehydrogenase (332 aa).

NAD(+) contacts are provided by residues 11-12 (RI), Asp-34, Arg-78, and Ser-120. Residues 151 to 153 (SCT), Thr-182, Arg-197, 210 to 211 (TG), and Arg-233 contribute to the D-glyceraldehyde 3-phosphate site. Catalysis depends on Cys-152, which acts as the Nucleophile. An NAD(+)-binding site is contributed by Asn-314.

Belongs to the glyceraldehyde-3-phosphate dehydrogenase family. As to quaternary structure, homotetramer.

Its subcellular location is the cytoplasm. The enzyme catalyses D-glyceraldehyde 3-phosphate + phosphate + NAD(+) = (2R)-3-phospho-glyceroyl phosphate + NADH + H(+). It participates in carbohydrate degradation; glycolysis; pyruvate from D-glyceraldehyde 3-phosphate: step 1/5. Catalyzes the oxidative phosphorylation of glyceraldehyde 3-phosphate (G3P) to 1,3-bisphosphoglycerate (BPG) using the cofactor NAD. The first reaction step involves the formation of a hemiacetal intermediate between G3P and a cysteine residue, and this hemiacetal intermediate is then oxidized to a thioester, with concomitant reduction of NAD to NADH. The reduced NADH is then exchanged with the second NAD, and the thioester is attacked by a nucleophilic inorganic phosphate to produce BPG. The polypeptide is Glyceraldehyde-3-phosphate dehydrogenase (gap) (Kitasatospora aureofaciens (Streptomyces aureofaciens)).